Reading from the N-terminus, the 281-residue chain is CDAN1-interacting nuclease 1 (281 aa).

The protein resides in the nucleus. It localises to the cytoplasm. Its function is as follows. Plays a role in erythroid cell differentiation. The polypeptide is CDAN1-interacting nuclease 1 (CDIN1) (Bos taurus (Bovine)).